Here is a 229-residue protein sequence, read N- to C-terminus: Large ribosomal subunit protein uL4 (229 aa).

The segment at 62 to 103 is disordered; that stretch reads SRRQGTHQVKNRAAVSGSGKKPWKQKGTGRARHSSRRSPIWV. Residues 82–97 show a composition bias toward basic residues; the sequence is KPWKQKGTGRARHSSR.

Belongs to the universal ribosomal protein uL4 family. In terms of assembly, part of the 50S ribosomal subunit.

Functionally, one of the primary rRNA binding proteins, this protein initially binds near the 5'-end of the 23S rRNA. It is important during the early stages of 50S assembly. It makes multiple contacts with different domains of the 23S rRNA in the assembled 50S subunit and ribosome. In terms of biological role, forms part of the polypeptide exit tunnel. The polypeptide is Large ribosomal subunit protein uL4 (Mycoplasmopsis synoviae (strain 53) (Mycoplasma synoviae)).